Consider the following 2725-residue polypeptide: Teneurin-1 (2725 aa).

Residues 1 to 48 (MEQTDCKPYQPLPKVKHEMDLAYTSSSDESEDGRKPRQSYNSRETLHE) are disordered. Positions 1–318 (MEQTDCKPYQ…KPYRCCNWKC (318 aa)) constitute a Teneurin N-terminal domain. Residues 1–324 (MEQTDCKPYQ…NWKCTALSAT (324 aa)) are Cytoplasmic-facing. The short motif at 62 to 65 (RKRK) is the Nuclear localization signal (NLS) element. S105 is modified (phosphoserine). Phosphothreonine is present on T109. S116 bears the Phosphoserine mark. The span at 174-189 (AGSTQDVQSSPHNQFT) shows a compositional bias: polar residues. The disordered stretch occupies residues 174 to 241 (AGSTQDVQSS…PAPPTSTQDS (68 aa)). The segment covering 192–201 (PLPPPPPPPH) has biased composition (pro residues). The Required for interaction with SORBS1 (Ten-1 ICD form) signature appears at 290–297 (PPPRPLPR). The chain crosses the membrane as a helical span at residues 325 to 345 (AITVTLALLLAYVIAVHLFGL). Over 346–2725 (TWQLQPVEGE…FMRQSEIGRR (2380 aa)) the chain is Extracellular. N433 carries N-linked (GlcNAc...) asparagine glycosylation. EGF-like domains are found at residues 528–559 (IMDD…PDCA), 560–591 (RDSC…ECDV), 592–624 (PEEQ…EICE), 625–657 (EEDC…NCET), 658–691 (PLPV…SDCS), 692–721 (TELC…GPTC), 722–753 (EERS…DHCT), and 761–796 (VRDG…TGCN). 22 cysteine pairs are disulfide-bonded: C532/C542, C536/C547, C549/C558, C567/C578, C580/C589, C596/C607, C601/C612, C614/C623, C628/C639, C633/C644, C646/C655, C666/C679, C681/C690, C695/C705, C699/C710, C712/C721, C726/C736, C730/C741, C743/C752, C765/C775, C769/C784, and C786/C795. Residues N905 and N1084 are each glycosylated (N-linked (GlcNAc...) asparagine). 5 NHL repeats span residues 1194–1219 (LFAP…VRRI), 1292–1336 (SHCG…NAVI), 1351–1402 (LSCD…IAGR), 1414–1458 (FLVS…VTTN), and 1481–1524 (CFSG…ISRN). A YD 1 repeat occupies 1534-1553 (YEIASPADQELYQFTVNGTH). N-linked (GlcNAc...) asparagine glycosylation is found at N1550 and N1567. 4 YD repeats span residues 1570–1590 (YNSE…VHIR), 1608–1632 (YWLT…ALMT), 1633–1654 (YPGN…TVYE), and 1655–1675 (YDPE…SSFH). N-linked (GlcNAc...) asparagine glycans are attached at residues N1663, N1699, N1757, N1781, and N1842. YD repeat units follow at residues 1845 to 1864 (YSPS…EKME), 1865 to 1885 (YDQS…WSYT), 1886 to 1904 (YLEK…YIFE), 1905 to 1925 (YDQP…HSLQ), 1933 to 1949 (YRNI…FIQD), 1950 to 1969 (YSRD…RRVL), 1970 to 1989 (YKYT…TQVT), 1992 to 2012 (YEES…FICT), 2015 to 2035 (YRQT…EGLV), 2085 to 2105 (YDLN…FSAN), and 2113 to 2133 (YEIL…VGRM). N2145 carries N-linked (GlcNAc...) asparagine glycosylation. YD repeat units lie at residues 2153-2173 (YDAD…WRYS), 2174-2194 (YDLN…LTPL), 2196-2216 (YDLR…DEDG), 2228-2248 (YNSN…TVQY), and 2250-2270 (YDGL…LQFF). A glycan (N-linked (GlcNAc...) asparagine) is linked at N2285. YD repeat units lie at residues 2296–2313 (YDLQ…GEEY) and 2314–2337 (YVAC…IKEI). S2580 is modified (phosphoserine). Residue N2602 is glycosylated (N-linked (GlcNAc...) asparagine).

It belongs to the tenascin family. Teneurin subfamily. In terms of assembly, homodimer; disulfide-linked. Heterodimer with either TENM2 or TENM3. May also form heterodimer with TENM4. Ten-1 ICD interacts with SORBS1 (via third SH3 domain). Interacts with MBD1. Ten-1 ICD interacts with HINT1. Post-translationally, derives from the plasma membrane form by proteolytic processing. Further proteolytic cleavage may be generated. In terms of tissue distribution, expressed in fetal brain.

The protein localises to the cell membrane. It localises to the nucleus. The protein resides in the nucleus speckle. It is found in the nucleus matrix. Its subcellular location is the cytoplasm. The protein localises to the cytoskeleton. Involved in neural development, regulating the establishment of proper connectivity within the nervous system. May function as a cellular signal transducer. In terms of biological role, plays a role in the regulation of neuroplasticity in the limbic system. Mediates a rapid reorganization of actin- and tubulin-based cytoskeleton elements with an increase in dendritic arborization and spine density formation of neurons in the hippocampus and amygdala. Induces BDNF transcription inhibition in neurons. Activates the mitogen-activated protein (MAP) kinase 2 (MEK2) and extracellular signal-regulated kinase (ERK) cascade. Also acts as a bioactive neuroprotective peptide on limbic neurons of the brain and regulates stress-induced behavior: attenuates alkalosis-associated necrotic cell death and the effects of corticotropin-releasing factor (CRF) on c-fos/FOS induction and on the reinstatement of cocaine seeking. Functionally, induces gene transcription activation. The sequence is that of Teneurin-1 (TENM1) from Homo sapiens (Human).